The chain runs to 357 residues: Iron deficiency-induced protein A (357 aa).

Positions 1–36 form a signal peptide, tat-type signal; the sequence is MSESMFSRRDFLLGGTALAGTLLLDSFGDWRRRAEA. Residues His48, Tyr49, Tyr182, Tyr238, and Tyr239 each coordinate Fe cation.

This sequence belongs to the bacterial solute-binding protein 1 family. In terms of processing, predicted to be exported by the Tat system. The position of the signal peptide cleavage has not been experimentally proven.

The protein localises to the cellular thylakoid membrane. Functionally, plays an important role in protecting the acceptor side of photosystem II (PSII) against oxidative damage, especially under iron-limiting growth conditions. In terms of biological role, may also be part of a periplasmic ABC transporter complex involved in iron import. This is Iron deficiency-induced protein A (idiA) from Synechococcus elongatus (strain ATCC 33912 / PCC 7942 / FACHB-805) (Anacystis nidulans R2).